The sequence spans 1589 residues: Cell division control protein 25 (1589 aa).

Polar residues predominate over residues 1 to 14; that stretch reads MSDTNTSIPNTSSA. Disordered regions lie at residues 1 to 53, 121 to 243, 359 to 424, and 553 to 574; these read MSDT…STSE, NFGR…MNTN, ANIE…SLSA, and TMND…GDDG. A compositionally biased stretch (low complexity) spans 20-53; it reads ASQTPSISSSSNTSTTTNTESSSASLSSSPSTSE. In terms of domain architecture, SH3 spans 58–128; that stretch reads RPIGIVVAAY…PQNFGRPLRD (71 aa). The span at 130-139 shows a compositional bias: basic residues; that stretch reads HLRKHSHPMK. Residues 143-158 show a composition bias toward low complexity; the sequence is SSKSSRRSSLNSLGNS. A phosphoserine mark is found at Ser151 and Ser154. 2 stretches are compositionally biased toward polar residues: residues 173-205 and 211-238; these read GSST…SPFS and SHIT…DGSS. A compositionally biased stretch (basic and acidic residues) spans 359–375; sequence ANIEDSSTRSKQSESEQ. Positions 415-424 are enriched in polar residues; sequence GPSSLNSLSA. The residue at position 423 (Ser423) is a Phosphoserine. 3 positions are modified to phosphoserine: Ser580, Ser596, and Ser632. Residue Thr635 is modified to Phosphothreonine. Phosphoserine is present on Ser649. The region spanning 1117-1247 is the N-terminal Ras-GEF domain; sequence SRGKIRGGTK…LLQKINEKLI (131 aa). Basic and acidic residues predominate over residues 1249-1259; it reads ENEKEPVDPKQ. The interval 1249-1287 is disordered; it reads ENEKEPVDPKQQDSVSAVVQTTKRDNKSPIHMSSSSLPS. Polar residues predominate over residues 1260–1269; sequence QDSVSAVVQT. A Ras-GEF domain is found at 1305 to 1542; that stretch reads DPYTYATQLT…YQLSLQVEPR (238 aa). A helical membrane pass occupies residues 1452 to 1473; the sequence is DVACVPFFGVYLSDLTFTFVGN. Positions 1570–1589 are disordered; it reads DKNGNFLKLGKKKPPSRLFR. A compositionally biased stretch (basic residues) spans 1578 to 1589; that stretch reads LGKKKPPSRLFR.

It localises to the membrane. Promotes the exchange of Ras-bound GDP by GTP. This protein positively controls the level of cellular cAMP at start, the stage at which the yeast cell division cycle is triggered. This chain is Cell division control protein 25 (CDC25), found in Saccharomyces cerevisiae (strain ATCC 204508 / S288c) (Baker's yeast).